A 491-amino-acid chain; its full sequence is MEPSILLLLALLVGFLLLLVRGHPKSRGNFPPGPRPLPLLGNLLQLDRGGLLNSFMQLREKYGDVFTVHLGPRPVVMLCGTDTIKEALVGQAEDFSGRGTIAVIEPIFKEYGVIFANGERWKALRRFSLATMRDFGMGKRSVEERIQEEAQCLVEELRKSQGAPLDPTFLFQCITANIICSIVFGERFDYTDRQFLRLLELFYRTFSLLSSFSSQVFEFFSGFLKYFPGAHRQISKNLQEILDYIGHIVEKHRATLDPSAPRDFIDTYLLRMEKEKSNHHTEFHHENLMISLLSLFFAGTETGSTTLRYGFLLMLKYPHVTEKVQKEIDQVIGSHRPPSLDDRTKMPYTDAVIHEIQRFADLAPIGLPHRVTKDTMFRGYLLPKNTEVYPILSSALHDPQYFDHPDTFNPEHFLDADGTLKKSEAFMPFSTGKRICLGEGIARNELFLFFTTILQNFSVSSHLAPKDIDLTPKESGIAKIPPTYQICFSAR.

Serine 128 bears the Phosphoserine; by PKA mark. Cysteine 436 contributes to the heme binding site.

The protein belongs to the cytochrome P450 family. Heme serves as cofactor. Phosphorylation is accompanied by a decrease in enzyme activity.

Its subcellular location is the endoplasmic reticulum membrane. The protein resides in the microsome membrane. It catalyses the reaction an organic molecule + reduced [NADPH--hemoprotein reductase] + O2 = an alcohol + oxidized [NADPH--hemoprotein reductase] + H2O + H(+). Its function is as follows. Cytochromes P450 are a group of heme-thiolate monooxygenases. In liver microsomes, this enzyme is involved in an NADPH-dependent electron transport pathway. It oxidizes a variety of structurally unrelated compounds, including steroids, fatty acids, and xenobiotics. The sequence is that of Cytochrome P450 2B2 (Cyp2b2) from Rattus norvegicus (Rat).